The chain runs to 75 residues: UPF0352 protein CKO_00587 (75 aa).

The protein belongs to the UPF0352 family.

The protein is UPF0352 protein CKO_00587 of Citrobacter koseri (strain ATCC BAA-895 / CDC 4225-83 / SGSC4696).